The following is a 282-amino-acid chain: Bifunctional protein FolD (282 aa).

NADP(+)-binding positions include 164 to 166, isoleucine 189, and isoleucine 230; that span reads GAS.

Belongs to the tetrahydrofolate dehydrogenase/cyclohydrolase family. In terms of assembly, homodimer.

The catalysed reaction is (6R)-5,10-methylene-5,6,7,8-tetrahydrofolate + NADP(+) = (6R)-5,10-methenyltetrahydrofolate + NADPH. The enzyme catalyses (6R)-5,10-methenyltetrahydrofolate + H2O = (6R)-10-formyltetrahydrofolate + H(+). It functions in the pathway one-carbon metabolism; tetrahydrofolate interconversion. Catalyzes the oxidation of 5,10-methylenetetrahydrofolate to 5,10-methenyltetrahydrofolate and then the hydrolysis of 5,10-methenyltetrahydrofolate to 10-formyltetrahydrofolate. The sequence is that of Bifunctional protein FolD from Campylobacter jejuni subsp. jejuni serotype O:2 (strain ATCC 700819 / NCTC 11168).